A 183-amino-acid chain; its full sequence is Pectinesterase inhibitor 8 (183 aa).

The N-terminal stretch at 1-30 (MAQRASRRPAAAAAAVVVAVVLAVSGGVGA) is a signal peptide. 2 disulfide bridges follow: cysteine 36-cysteine 51 and cysteine 107-cysteine 147.

It belongs to the PMEI family.

The protein localises to the secreted. It is found in the extracellular space. It localises to the apoplast. Pectin methylesterase (PME) inhibitor that inhibits PME in vitro. The sequence is that of Pectinesterase inhibitor 8 from Oryza sativa subsp. japonica (Rice).